Consider the following 804-residue polypeptide: Leucine--tRNA ligase (804 aa).

The 'HIGH' region motif lies at 40–51; it reads PYPSGQGLHVGH. The short motif at 576–580 is the 'KMSKS' region element; the sequence is KMSKS. Position 579 (lysine 579) interacts with ATP.

Belongs to the class-I aminoacyl-tRNA synthetase family.

The protein resides in the cytoplasm. The enzyme catalyses tRNA(Leu) + L-leucine + ATP = L-leucyl-tRNA(Leu) + AMP + diphosphate. In Oceanobacillus iheyensis (strain DSM 14371 / CIP 107618 / JCM 11309 / KCTC 3954 / HTE831), this protein is Leucine--tRNA ligase.